A 398-amino-acid chain; its full sequence is Type III polyketide synthase pspB (398 aa).

CoA is bound by residues Lys47 and 47 to 54 (KLLQINRS). Cys152 serves as the catalytic Nucleophile. Substrate is bound at residue 214–215 (SD). CoA contacts are provided by residues Leu267, Gly321, 321–324 (GGEA), and Ala324.

This sequence belongs to the thiolase-like superfamily. Chalcone/stilbene synthases family. In terms of assembly, homodimer.

It carries out the reaction 11 malonyl-CoA + acetyl-CoA + S-adenosyl-L-methionine + 12 NADPH + 22 H(+) = soppiline B + S-adenosyl-L-homocysteine + 12 CO2 + 12 NADP(+) + 12 CoA + 8 H2O. The protein operates within secondary metabolite biosynthesis. In terms of biological role, type III polyketide synthase; part of the gene cluster that mediates the biosynthesis of the alkylresorcinols called soppilines. The biosynthesis starts with the HR-PKS pspA-catalyzed carbon chain assembly through nine chain elongation cycles, using acetyl CoA and malonyl CoA as a starter and extender units, respectively, to produce the polyketide soppiline A. In the first round, the KR, DH, and CMeT domains work to produce 2-methyl-2-butenyl thioester. In rounds 2 to 5, the KR, DH, and ER domains fully catalyze the reduction of the elongated beta-ketothioester, resulting in the insertion of eight methylene units. The unusual Z,E,Z-triene motif is likely constructed during rounds 6 to 8. Typically, the DH domain introduces a double bond at an alpha,beta-position of an elongated polyketide chain, with the dehydration of a beta-hydroxy group. The last extension cycle would be carried out with L-oriented beta-ketoreduction by the KR domain to produce beta-hydroxy carboxylic acid soppiline A. The type III PKS pspB intercepts the elongated polyketide chain at round 8 from the HR-PKS pspA, followed by a tri-keto extension and decarboxylative aldol cyclization to produce 1,3,5-trisubstituted alkylresorcinol soppiline B. Subsequently, the cytochrome P450 monooxygenase pspC catalyzes three-step oxidations at the C-4 methyl group to carboxylic acid to yield soppiline C. The polypeptide is Type III polyketide synthase pspB (Penicillium soppii).